Reading from the N-terminus, the 443-residue chain is tRNA modification GTPase MnmE (443 aa).

(6S)-5-formyl-5,6,7,8-tetrahydrofolate-binding residues include Arg23, Glu82, and Lys121. Positions 215-364 (GTSIVLAGHP…LKQFIQKWMQ (150 aa)) constitute a TrmE-type G domain. Residue Asn225 coordinates K(+). Residues 225–230 (NVGKSS), 244–250 (TDIPGTT), and 269–272 (DSAG) each bind GTP. Mg(2+) is bound at residue Ser229. Residues Thr244, Ile246, and Thr249 each coordinate K(+). Residue Thr250 participates in Mg(2+) binding. Lys443 is a binding site for (6S)-5-formyl-5,6,7,8-tetrahydrofolate.

It belongs to the TRAFAC class TrmE-Era-EngA-EngB-Septin-like GTPase superfamily. TrmE GTPase family. In terms of assembly, homodimer. Heterotetramer of two MnmE and two MnmG subunits. Requires K(+) as cofactor.

The protein localises to the cytoplasm. Functionally, exhibits a very high intrinsic GTPase hydrolysis rate. Involved in the addition of a carboxymethylaminomethyl (cmnm) group at the wobble position (U34) of certain tRNAs, forming tRNA-cmnm(5)s(2)U34. In Chlamydia caviae (strain ATCC VR-813 / DSM 19441 / 03DC25 / GPIC) (Chlamydophila caviae), this protein is tRNA modification GTPase MnmE.